The sequence spans 400 residues: Argininosuccinate synthase (400 aa).

10–18 (AYSGGVDTS) serves as a coordination point for ATP. Tyrosine 89 provides a ligand contact to L-citrulline. Glycine 119 lines the ATP pocket. Residues threonine 121, asparagine 125, and aspartate 126 each contribute to the L-aspartate site. An L-citrulline-binding site is contributed by asparagine 125. 5 residues coordinate L-citrulline: arginine 129, serine 177, serine 186, glutamate 262, and tyrosine 274.

Belongs to the argininosuccinate synthase family. Type 1 subfamily. As to quaternary structure, homotetramer.

It localises to the cytoplasm. It carries out the reaction L-citrulline + L-aspartate + ATP = 2-(N(omega)-L-arginino)succinate + AMP + diphosphate + H(+). Its pathway is amino-acid biosynthesis; L-arginine biosynthesis; L-arginine from L-ornithine and carbamoyl phosphate: step 2/3. This is Argininosuccinate synthase from Synechococcus sp. (strain JA-2-3B'a(2-13)) (Cyanobacteria bacterium Yellowstone B-Prime).